The following is a 336-amino-acid chain: D-aspartate oxidase (336 aa).

Residues E34, K35, T41, S42, G304, V308, and S309 each contribute to the FAD site. A Microbody targeting signal motif is present at residues S334–L336.

The protein belongs to the DAMOX/DASOX family. In terms of assembly, monomer. The cofactor is FAD.

It is found in the peroxisome matrix. It catalyses the reaction D-aspartate + O2 + H2O = oxaloacetate + H2O2 + NH4(+). The catalysed reaction is D-glutamate + O2 + H2O = H2O2 + 2-oxoglutarate + NH4(+). Functionally, selectively catalyzes the oxidative deamination of acidic amino acids. Suppresses the level of D-aspartate in the brain, an amino acid that can act as an agonist for glutamate receptors. Protects the organism from the toxicity of D-amino acids. May also function in the intestine. This Octopus vulgaris (Common octopus) protein is D-aspartate oxidase.